The sequence spans 2371 residues: NBAS subunit of NRZ tethering complex (2371 aa).

Positions 1-1035 (MAAPESGPAL…KTEATTKLHD (1035 aa)) are interaction with USE1. 2 WD repeats span residues 130–169 (DPKP…LFVI) and 316–355 (QEQD…QQGE). Residues Ser473 and Ser475 each carry the phosphoserine modification. Residues 1036–2371 (MVDQLEQILS…TALRAAQHWV (1336 aa)) form an interaction with ZW10 and RINT1 region. At Lys1057 the chain carries N6-acetyllysine.

In terms of assembly, component of the NRZ complex composed of NBAS, ZW10 and RINT1/TIP20L; NRZ associates with SNAREs STX18, USE1, BNIP1/SEC20L and SEC22B (the assembly has been described as syntaxin 18 complex); links NRZ to SNARE USE1. In terms of tissue distribution, broadly expressed, with highest levels in heart and skeletal muscle, and lowest levels in liver, small intestine and thymus. Well expressed in retinal ganglion cells, epidermal skin cells, and leukocytes. Up-regulated together with N-myc in some neuroblastoma cell lines.

The protein localises to the cytoplasm. It localises to the endoplasmic reticulum. Its subcellular location is the endoplasmic reticulum membrane. In terms of biological role, involved in Golgi-to-endoplasmic reticulum (ER) retrograde transport; the function is proposed to depend on its association in the NRZ complex which is believed to play a role in SNARE assembly at the ER. Required for normal embryonic development. May play a role in the nonsense-mediated decay pathway of mRNAs containing premature stop codons. This is NBAS subunit of NRZ tethering complex from Homo sapiens (Human).